We begin with the raw amino-acid sequence, 219 residues long: Dual specificity phosphatase 29 (219 aa).

One can recognise a Tyrosine-protein phosphatase domain in the interval histidine 53–glutamine 201. Histidine 145–arginine 152 lines the substrate pocket. Cysteine 146 acts as the Phosphocysteine intermediate in catalysis.

This sequence belongs to the protein-tyrosine phosphatase family. Non-receptor class dual specificity subfamily. As to quaternary structure, homodimer. Interacts with PRKAA2.

The protein localises to the cytoplasm. It is found in the nucleus. The enzyme catalyses O-phospho-L-tyrosyl-[protein] + H2O = L-tyrosyl-[protein] + phosphate. The catalysed reaction is O-phospho-L-seryl-[protein] + H2O = L-seryl-[protein] + phosphate. It catalyses the reaction O-phospho-L-threonyl-[protein] + H2O = L-threonyl-[protein] + phosphate. In terms of biological role, dual specificity phosphatase able to dephosphorylate phosphotyrosine, phosphoserine and phosphothreonine residues within the same substrate, with a preference for phosphotyrosine as a substrate. Involved in the modulation of intracellular signaling cascades. May regulate glucose metabolism by activating, AMPK, an energy sensor protein kinase. Affects MAP kinase signaling though modulation of the ERK1/2 cascade in skeletal muscle promoting muscle cell differentiation, development and atrophy. The protein is Dual specificity phosphatase 29 (DUSP29) of Bos taurus (Bovine).